The sequence spans 320 residues: Methionyl-tRNA formyltransferase (320 aa).

Residue 114–117 (SLLP) participates in (6S)-5,6,7,8-tetrahydrofolate binding.

Belongs to the Fmt family.

The enzyme catalyses L-methionyl-tRNA(fMet) + (6R)-10-formyltetrahydrofolate = N-formyl-L-methionyl-tRNA(fMet) + (6S)-5,6,7,8-tetrahydrofolate + H(+). Functionally, attaches a formyl group to the free amino group of methionyl-tRNA(fMet). The formyl group appears to play a dual role in the initiator identity of N-formylmethionyl-tRNA by promoting its recognition by IF2 and preventing the misappropriation of this tRNA by the elongation apparatus. This chain is Methionyl-tRNA formyltransferase, found in Acinetobacter baumannii (strain AB307-0294).